The following is a 445-amino-acid chain: Transcription activator AFTR-1 (445 aa).

The segment at residues 17–44 (CDFCTQSKLRCNKNKPSCRRCTLQQQPC) is a DNA-binding region (zn(2)-C6 fungal-type). Residues 50–89 (RRTGRPPKHPRKANDCQEANGQHGDQDPVTSTPGGSYQQQ) form a disordered region. The segment covering 51-60 (RTGRPPKHPR) has biased composition (basic residues). Positions 77-89 (PVTSTPGGSYQQQ) are enriched in polar residues.

It is found in the nucleus. Its function is as follows. Transcription factor that regulates the expression of the gene clusters that mediate the biosynthesis of the host-selective toxins (HSTs) AF-toxins responsible for Alternaria black spot of strawberry disease by the strawberry pathotype. On cellular level, AF-toxins affect plasma membrane of susceptible cells and cause a sudden increase in loss of K(+) after a few minutes of toxin treatment. This is Transcription activator AFTR-1 from Alternaria alternata (Alternaria rot fungus).